The primary structure comprises 263 residues: MARRRRHRGPRRPRPPGPTGAVPTAQSQVTSTPNSEPAVRSAPAAAPPPPPASGPPPSCSLLLRQWLHVPESASDDDDDDDWPDSPPPEPAPEARPTAAAPRPRSPPPGAGPGGGANPSHPPSRPFRLPPRLALRLRVTAEHLARLRLRRAGGEGAPEPPATPATPATPATPATPATPATPATPATPATPARVRFSPHVRVRHLVVWASAARLARRGSWARERADRARFRRRVAEAEAVIGPCLGPEARARALARGAGPANSV.

The segment covering 1–14 (MARRRRHRGPRRPR) has biased composition (basic residues). The interval 1–16 (MARRRRHRGPRRPRPP) is required for nucleolar localization. Disordered stretches follow at residues 1–128 (MARR…PFRL) and 149–190 (RRAG…PATP). A compositionally biased stretch (polar residues) spans 24–35 (TAQSQVTSTPNS). A compositionally biased stretch (pro residues) spans 45-58 (AAPPPPPASGPPPS). The span at 73-83 (ASDDDDDDDWP) shows a compositional bias: acidic residues. Pro residues-rich tracts occupy residues 84–93 (DSPPPEPAPE) and 119–128 (SHPPSRPFRL). The short motif at 128–137 (LPPRLALRLR) is the Nuclear export signal element. 10 repeat units span residues 161–163 (ATP), 164–166 (ATP), 167–169 (ATP), 170–172 (ATP), 173–175 (ATP), 176–178 (ATP), 179–181 (ATP), 182–184 (ATP), 185–187 (ATP), and 188–190 (ATP). The 10 X 3 AA tandem repeats of A-T-P stretch occupies residues 161–190 (ATPATPATPATPATPATPATPATPATPATP). Positions 164-190 (ATPATPATPATPATPATPATPATPATP) are enriched in low complexity. The segment at 190 to 203 (PARVRFSPHVRVRH) is interaction with host PPP1CA. The segment at 205–263 (VVWASAARLARRGSWARERADRARFRRRVAEAEAVIGPCLGPEARARALARGAGPANSV) is important for interferon resistance. The Bipartite nuclear localization signal motif lies at 215–233 (RRGSWARERADRARFRRRV). Residues 233–248 (VAEAEAVIGPCLGPEA) form an interaction with host EIF2S1/EIF-2ALPHA region.

It belongs to the PPP1R15 family. Interacts with host PPP1CA; this interaction to forms a high-molecular-weight complex that dephosphorylates EIF2S1/eIF-2alpha. Interacts with host EIF2S1/eIF-2alpha; this interaction is crucial for the specific dephosphorylation of EIF2S1/eIF-2alpha by PPP1CA. Binds to proliferating cell nuclear antigen (PCNA), which may release host cells from growth arrest and facilitate viral replication. Interacts (via N-terminus) with host C1QBP; this interaction allows C1QBP to be recruited to the inner nuclear membrane by ICP34.5. Interacts with host PRKCA. Interacts with protein UL31. Interacts with host STING/TMEM173; this interaction inhibits the intracellular DNA sensing pathway. Interacts with host BECN1; this interaction modulates host autophagy.

The protein resides in the host cytoplasm. It is found in the host nucleus. The protein localises to the host nucleolus. It localises to the virion. Its function is as follows. Inhibits the establishment of the immune response and of the integrated stress response (ISR) in the infected cell. Plays essential roles in viral nuclear egress to mediate capsid transit across the nuclear membrane. Facilitates nuclear egress cooperatively with host C1QBP and protein kinase C/PKC to induce lamin A/C phosphorylation and subsequent reorganization. In turn, lamina disassembles and nuclear egress occurs. Recruits the serine/threonine protein phosphatase PPP1CA/PP1-alpha to dephosphorylate the translation initiation factor EIF2S1/eIF-2alpha, thereby couteracting the host shutoff of protein synthesis involving double-stranded RNA-dependent protein kinase EIF2AK2/PKR. In turn, controls host IRF3 activation and subsequently inhibits host interferon response. Controls the DNA sensing pathway by interacting with and inhibiting host STING/TMEM173. Also down-modulates the host MHC class II proteins cell surface expression. Acts as a neurovirulence factor that has a profound effect on the growth of the virus in central nervous system tissue, by interacting with host BECN1 and thereby antagonizing the host autophagy response. This chain is Neurovirulence factor ICP34.5 (RL1), found in Human herpesvirus 1 (strain F) (HHV-1).